The sequence spans 747 residues: Endopolyphosphatase (747 aa).

Met1 is a topological domain (cytoplasmic). The chain crosses the membrane as a helical; Signal-anchor for type II membrane protein span at residues 2-22 (LPKTLTIWASLASLAVAQSGQ). At 23–747 (VVFAKNADGK…AEYLEEPDDD (725 aa)) the chain is on the vacuolar side. Residues Asn134, Asn191, and Asn463 are each glycosylated (N-linked (GlcNAc...) asparagine). The disordered stretch occupies residues 570–640 (AVATSSEPES…PKFPKDLQPG (71 aa)). The segment covering 577 to 586 (PESDDYDSDL) has biased composition (acidic residues). Basic residues predominate over residues 591-625 (KKGKKKGKKGKKGKKGKKGKKKKGKKGKKGKKGKR). A compositionally biased stretch (basic and acidic residues) spans 626–635 (DKSMPPKFPK). An N-linked (GlcNAc...) asparagine glycan is attached at Asn659.

Belongs to the endopolyphosphatase PPN1 family. Requires a divalent metal cation as cofactor. In terms of processing, processing by proteases in the vacuole may be required for activation.

Its subcellular location is the vacuole membrane. It catalyses the reaction [phosphate](n+1) + n H2O = (n+1) phosphate + n H(+). Functionally, catalyzes the hydrolysis of inorganic polyphosphate (polyP) chains of many hundreds of phosphate residues into shorter lengths. The sequence is that of Endopolyphosphatase (PPN1) from Yarrowia lipolytica (strain CLIB 122 / E 150) (Yeast).